The following is a 217-amino-acid chain: MAQAMASMTGLSQGVQLPAGPRRAGGRSRLAVVRADAAAADVQTGRRAVLGLVATGIAGGALAQAALAEAAKPIKLGPPPPPSGGLPGTLNSDQARDTDLPLRERFYLQPLPPAEAAARAKESAQDIINLKPLIEKKQWPFVRDDLRLRASYLRYDLKTVINSKPKDEKKGLKDLTGKLFATIDGLDHAAKIKSPEEAEKYYTLTKSALGDVLAKLG.

Disordered regions lie at residues 1-25 and 73-95; these read MAQAMASMTGLSQGVQLPAGPRRAG and PIKLGPPPPPSGGLPGTLNSDQA. The N-terminal 63 residues, 1-63, are a transit peptide targeting the chloroplast; sequence MAQAMASMTG…ATGIAGGALA (63 aa).

Belongs to the PsbQ family.

It localises to the plastid. It is found in the chloroplast thylakoid membrane. In Oryza sativa subsp. indica (Rice), this protein is Oxygen-evolving enhancer protein 3, chloroplastic.